Reading from the N-terminus, the 263-residue chain is Type III pantothenate kinase (263 aa).

Position 6-13 (6-13 (DVGNTRIK)) interacts with ATP. Residues Tyr-92 and 99–102 (GTDR) contribute to the substrate site. Asp-101 serves as the catalytic Proton acceptor. Thr-124 contributes to the ATP binding site. A substrate-binding site is contributed by Thr-174.

This sequence belongs to the type III pantothenate kinase family. Homodimer. Requires NH4(+) as cofactor. The cofactor is K(+).

It is found in the cytoplasm. It catalyses the reaction (R)-pantothenate + ATP = (R)-4'-phosphopantothenate + ADP + H(+). Its pathway is cofactor biosynthesis; coenzyme A biosynthesis; CoA from (R)-pantothenate: step 1/5. Its function is as follows. Catalyzes the phosphorylation of pantothenate (Pan), the first step in CoA biosynthesis. This chain is Type III pantothenate kinase, found in Azoarcus sp. (strain BH72).